The chain runs to 428 residues: Histidine--tRNA ligase (428 aa).

The protein belongs to the class-II aminoacyl-tRNA synthetase family. Homodimer.

Its subcellular location is the cytoplasm. It carries out the reaction tRNA(His) + L-histidine + ATP = L-histidyl-tRNA(His) + AMP + diphosphate + H(+). This chain is Histidine--tRNA ligase, found in Staphylococcus carnosus (strain TM300).